The sequence spans 218 residues: Alkylmercury lyase (218 aa).

This sequence belongs to the MerB family.

It catalyses the reaction an alkylmercury + H(+) = an alkane + Hg(2+). Functionally, cleaves the carbon-mercury bond of organomercurials such as phenylmercuric acetate. One product is Hg(2+), which is subsequently detoxified by the mercuric reductase. The chain is Alkylmercury lyase from Clostridium butyricum.